The chain runs to 459 residues: tRNA(Ile2) 2-agmatinylcytidine synthetase TiaS (459 aa).

Positions 282–360 (VRVRVWVASI…TINLEKLHII (79 aa)) form a DNA-binding region, OB.

This sequence belongs to the TiaS family.

The protein localises to the cytoplasm. The catalysed reaction is cytidine(34) in tRNA(Ile2) + agmatine + ATP + H2O = 2-agmatinylcytidine(34) in tRNA(Ile2) + AMP + 2 phosphate + 2 H(+). Functionally, ATP-dependent agmatine transferase that catalyzes the formation of 2-agmatinylcytidine (agm2C) at the wobble position (C34) of tRNA(Ile2), converting the codon specificity from AUG to AUA. The chain is tRNA(Ile2) 2-agmatinylcytidine synthetase TiaS from Staphylothermus marinus (strain ATCC 43588 / DSM 3639 / JCM 9404 / F1).